A 119-amino-acid chain; its full sequence is 5-hydroxyisourate hydrolase (119 aa).

Residues His-10, Arg-48, and Tyr-116 each coordinate substrate.

Belongs to the transthyretin family. 5-hydroxyisourate hydrolase subfamily. In terms of assembly, homotetramer.

It carries out the reaction 5-hydroxyisourate + H2O = 5-hydroxy-2-oxo-4-ureido-2,5-dihydro-1H-imidazole-5-carboxylate + H(+). It functions in the pathway purine metabolism; urate degradation; (S)-allantoin from urate: step 2/3. In terms of biological role, catalyzes the hydrolysis of 5-hydroxyisourate (HIU) to 2-oxo-4-hydroxy-4-carboxy-5-ureidoimidazoline (OHCU). In Deinococcus radiodurans (strain ATCC 13939 / DSM 20539 / JCM 16871 / CCUG 27074 / LMG 4051 / NBRC 15346 / NCIMB 9279 / VKM B-1422 / R1), this protein is 5-hydroxyisourate hydrolase.